The following is a 285-amino-acid chain: HTH-type transcriptional regulator MurR (285 aa).

Residues 1-77 enclose the HTH rpiR-type domain; sequence MLYLTKISNA…MALIGEYSAS (77 aa). A DNA-binding region (H-T-H motif) is located at residues 37 to 56; that stretch reads SRQMAKQLGISQSSIVKFAQ. Residues 128–279 enclose the SIS domain; sequence IIEVISKAPF…SLKMIQRSSE (152 aa).

Homotetramer.

The protein operates within amino-sugar metabolism; N-acetylmuramate degradation [regulation]. Represses the expression of the murPQ operon involved in the uptake and degradation of N-acetylmuramic acid (MurNAc). Binds to two adjacent inverted repeats within the operator region. MurNAc 6-phosphate, the substrate of MurQ, is the specific inducer that weakens binding of MurR to the operator. In Shigella boydii serotype 18 (strain CDC 3083-94 / BS512), this protein is HTH-type transcriptional regulator MurR.